Here is a 633-residue protein sequence, read N- to C-terminus: tRNA uridine 5-carboxymethylaminomethyl modification enzyme MnmG (633 aa).

FAD-binding positions include 15 to 20, valine 127, and serine 182; that span reads GAGHAG. Residue 276-290 coordinates NAD(+); sequence GPRYCPSIEDKIVRF. FAD is bound at residue glutamine 373.

Belongs to the MnmG family. As to quaternary structure, homodimer. Heterotetramer of two MnmE and two MnmG subunits. FAD is required as a cofactor.

The protein resides in the cytoplasm. NAD-binding protein involved in the addition of a carboxymethylaminomethyl (cmnm) group at the wobble position (U34) of certain tRNAs, forming tRNA-cmnm(5)s(2)U34. The polypeptide is tRNA uridine 5-carboxymethylaminomethyl modification enzyme MnmG (Streptococcus thermophilus (strain CNRZ 1066)).